Reading from the N-terminus, the 1665-residue chain is Protein scribble homolog (1665 aa).

The interval 1 to 804 (MLKCIPLWRC…MRVWRERMVE (804 aa)) is sufficient for targeting to adherens junction and to inhibit cell proliferation. Ser37 carries the post-translational modification Phosphoserine. LRR repeat units lie at residues 37–58 (SLEELLLDANQLRELPKPFFRL), 60–81 (NLRKLGLSDNEIQRLPPEVANF), 83–104 (QLVELDVSRNDIPEIPESIKFC), 106–127 (ALEIADFSGNPLSRLPDGFTQL), 129–150 (SLAHLALNDVSLQALPGDVGNL), 152–174 (NLVTLELRENLLKSLPASLSFLV), 175–197 (KLEQLDLGGNDLEVLPDTLGALP), 198–219 (NLRELWLDRNQLSALPPELGNL), 221–243 (RLVCLDVSENRLEELPVELGGLA), 244–265 (LLTDLLLSQNLLQRLPEGIGQL), 267–288 (QLSILKVDQNRLCEVTEAIGDC), 290–312 (NLSELILTENLLTALPHSLGKLT), 313–334 (KLTNLNVDRNHLEVLPPEIGGC), 336–357 (ALSVLSLRDNRLAVLPPELAHT), 359–381 (ELHVLDVAGNRLRSLPFALTHLN), and 382–402 (LKALWLAENQAQPMLRFQTED). The residue at position 378 (Thr378) is a Phosphothreonine. 2 disordered regions span residues 422 to 615 (PSLE…HFKI) and 635 to 689 (REGP…SAPS). Residues 428–437 (GQQSSPSESC) are compositionally biased toward polar residues. The segment covering 452-463 (DTLEGEEDAEEA) has biased composition (acidic residues). Residues 455 to 475 (EGEEDAEEAAAEKRGLQRRAT) are a coiled coil. Thr475 is subject to Phosphothreonine. Basic and acidic residues-rich tracts occupy residues 479-494 (SELKVMKRGIEERRNE) and 570-580 (FAEDTLIPRED). Ser583 bears the Phosphoserine mark. A coiled-coil region spans residues 653-687 (RAHEEEEEEEEENRDEEEGEATTEEDDKEEAVASA). The segment covering 657-681 (EEEEEEEENRDEEEGEATTEEDDKE) has biased composition (acidic residues). Thr674 and Thr675 each carry phosphothreonine. 2 positions are modified to phosphoserine: Ser694 and Ser750. Residues 703–1215 (IEPARIEEEE…SLESISSIDR (513 aa)) are interaction with ARHGEF7. The region spanning 714-801 (TLTIVRQTGG…AVQMRVWRER (88 aa)) is the PDZ 1 domain. The tract at residues 714–1180 (TLTIVRQTGG…TVLVCDGFDT (467 aa)) is required for interaction with VIM. Thr812 carries the post-translational modification Phosphothreonine. Phosphoserine is present on residues Ser821, Ser861, and Ser925. 3 PDZ domains span residues 848-936 (AACL…ERET), 990-1079 (EICL…RRDP), and 1086-1180 (ELCI…GFDT). Phosphoserine occurs at positions 1126, 1206, 1209, 1212, 1218, 1262, 1265, and 1284. The segment covering 1213-1228 (IDRELSPEGPGKEKEL) has biased composition (basic and acidic residues). The interval 1213-1246 (IDRELSPEGPGKEKELASQALPWESESAETTGRN) is disordered. Disordered regions lie at residues 1263 to 1325 (AGSL…DELP) and 1341 to 1501 (VHPP…AERR). Positions 1264–1277 (GSLQRGPSATTGGK) are enriched in polar residues. Omega-N-methylarginine is present on Lys1291. A Phosphoserine modification is found at Ala1299. Position 1312 is an omega-N-methylarginine (Arg1312). Ser1320 is modified (phosphoserine). Thr1353 bears the Phosphothreonine mark. Residue Ser1359 is modified to Phosphoserine. Positions 1364-1376 (SFRERQKYFELEV) are enriched in basic and acidic residues. At Ser1389 the chain carries Phosphoserine. Residues 1390–1421 (LVGADDLRKMQEEEARKLQQKRAQMLREEAVT) adopt a coiled-coil conformation. The span at 1394–1406 (DDLRKMQEEEARK) shows a compositional bias: basic and acidic residues. Phosphoserine occurs at positions 1455 and 1458. Residues 1471–1482 (AKAERRHQERLR) show a composition bias toward basic and acidic residues. Phosphoserine is present on residues Ser1485, Ser1496, and Ser1518. Residues 1530–1577 (LSKSQEGRGKRGPLERLAEAPSPAPTPSPTPLEDFGLQTSASPGRLPL) form a disordered region. The segment covering 1534-1547 (QEGRGKRGPLERLA) has biased composition (basic and acidic residues). Residue Ser1551 is modified to Phosphoserine. A Phosphothreonine modification is found at Thr1555. Phosphoserine occurs at positions 1557, 1571, and 1601. The disordered stretch occupies residues 1632-1665 (GRPSPGAVGPEDMTLCSSRRSVRPGRRGLGPVPS).

It belongs to the LAP (LRR and PDZ) protein family. As to quaternary structure, interacts with UBE3A. Interacts with PAK1 and PAK2. Interacts (via PDZ domains) with VANGL2. Interacts (via PDZ domains) with LPP and TRIP6; the interaction is direct. Interacts (via PDZ domains) with TJP2. Interacts (via PDZ domains) with APC; may mediate APC targeting to adherens junctions of epithelial cells. Interacts (via PDZ domains) with TSHR; regulates TSHR trafficking and function. Interacts with ARHGEF7 and GIT1; interacts directly with ARHGEF7. Interacts with CTNNB1. Interacts with MAPK12. Interacts (via PDZ domains 1 and 3) with MCC. Interacts with DLG5. Interacts with STK4/MST1 and LATS1 in the presence of DLG5. Interacts (via PDZ domain 3) with CRTAM (via PDZ-binding motif); the interaction promotes CRTAM and SCRIB polarization in a subset of CD4+ T-cells. Interacts with YES1, when YES1 is in a closed conformation; the interaction facilitates YES1 autophosphorylation. Interacts (via PDZ domains) with VIM; the interaction protects SCRIB from proteasomal degradation and facilitates SCRIB localization to intermediate filaments, the interaction is reduced by cell contact inhibition. In terms of processing, ubiquitinated; targeted for UBE3A-dependent multiubiquitination and degraded. Palmitoylated. Could be depalmitoylated by LYPLA1 and/or LYPLA2. Palmitoylation of SCRIB by ZDHHC7 is required for its localization to cell-cell junctions, function in the establishement of epithelial cell polarity and the regulation of downstream signaling pathways important for epithelial cell differentiation. Expressed in CD4+ T-cells (at protein level). Found in a wide range of tissues including liver, kidney and spleen. Also expressed in the brain (at protein level).

It localises to the cell membrane. Its subcellular location is the cell junction. The protein localises to the adherens junction. The protein resides in the cell projection. It is found in the lamellipodium. It localises to the cytoplasm. Its subcellular location is the postsynapse. The protein localises to the presynapse. Functionally, scaffold protein involved in different aspects of polarized cell differentiation regulating epithelial and neuronal morphogenesis and T-cell polarization. Via its interaction with CRTAM, required for the late phase polarization of a subset of CD4+ T-cells, which in turn regulates TCR-mediated proliferation and IFNG and IL22 production. Plays a role in cell directional movement, cell orientation, cell sheet organization and Golgi complex polarization at the cell migration front. Promotes epithelial cell layer barrier function via maintaining cell-cell adhesion. Most probably functions in the establishment of apico-basal cell polarity. May function in cell proliferation regulating progression from G1 to S phase and as a positive regulator of apoptosis for instance during acinar morphogenesis of the mammary epithelium. May regulate cell invasion via MAPK-mediated cell migration and adhesion. May play a role in exocytosis and in the targeting of synaptic vesicles to synapses. Functions as an activator of Rac GTPase activity. The polypeptide is Protein scribble homolog (Mus musculus (Mouse)).